The chain runs to 386 residues: Phosphoglycerate kinase (386 aa).

Substrate contacts are provided by residues Asp21–Asn23, Arg36, His59–Arg62, Arg113, and Arg146. ATP contacts are provided by residues Lys197, Glu314, and Gly340 to Thr343.

The protein belongs to the phosphoglycerate kinase family. As to quaternary structure, monomer.

It is found in the cytoplasm. The catalysed reaction is (2R)-3-phosphoglycerate + ATP = (2R)-3-phospho-glyceroyl phosphate + ADP. Its pathway is carbohydrate degradation; glycolysis; pyruvate from D-glyceraldehyde 3-phosphate: step 2/5. This Ectopseudomonas mendocina (strain ymp) (Pseudomonas mendocina) protein is Phosphoglycerate kinase.